Reading from the N-terminus, the 155-residue chain is 6,7-dimethyl-8-ribityllumazine synthase (155 aa).

Residues Phe22, 57–59 (AYE), and 81–83 (SVI) each bind 5-amino-6-(D-ribitylamino)uracil. 86–87 (GT) is a binding site for (2S)-2-hydroxy-3-oxobutyl phosphate. The active-site Proton donor is His88. Phe113 serves as a coordination point for 5-amino-6-(D-ribitylamino)uracil. Residue Arg127 coordinates (2S)-2-hydroxy-3-oxobutyl phosphate.

The protein belongs to the DMRL synthase family. In terms of assembly, forms an icosahedral capsid composed of 60 subunits, arranged as a dodecamer of pentamers.

The enzyme catalyses (2S)-2-hydroxy-3-oxobutyl phosphate + 5-amino-6-(D-ribitylamino)uracil = 6,7-dimethyl-8-(1-D-ribityl)lumazine + phosphate + 2 H2O + H(+). It functions in the pathway cofactor biosynthesis; riboflavin biosynthesis; riboflavin from 2-hydroxy-3-oxobutyl phosphate and 5-amino-6-(D-ribitylamino)uracil: step 1/2. In terms of biological role, catalyzes the formation of 6,7-dimethyl-8-ribityllumazine by condensation of 5-amino-6-(D-ribitylamino)uracil with 3,4-dihydroxy-2-butanone 4-phosphate. This is the penultimate step in the biosynthesis of riboflavin. This chain is 6,7-dimethyl-8-ribityllumazine synthase, found in Photobacterium phosphoreum.